The chain runs to 336 residues: Glucokinase (336 aa).

12–17 (ADIGGT) serves as a coordination point for ATP.

It belongs to the bacterial glucokinase family.

The protein resides in the cytoplasm. It carries out the reaction D-glucose + ATP = D-glucose 6-phosphate + ADP + H(+). The protein is Glucokinase of Helicobacter acinonychis (strain Sheeba).